Here is a 371-residue protein sequence, read N- to C-terminus: 2-aminoethylphosphonate--pyruvate transaminase (371 aa).

At Lys-195 the chain carries N6-(pyridoxal phosphate)lysine.

This sequence belongs to the class-V pyridoxal-phosphate-dependent aminotransferase family. PhnW subfamily. In terms of assembly, homodimer. The cofactor is pyridoxal 5'-phosphate.

The enzyme catalyses (2-aminoethyl)phosphonate + pyruvate = phosphonoacetaldehyde + L-alanine. Functionally, involved in phosphonate degradation. This Pseudomonas aeruginosa (strain UCBPP-PA14) protein is 2-aminoethylphosphonate--pyruvate transaminase.